A 410-amino-acid chain; its full sequence is Argininosuccinate synthase (410 aa).

Residues 13 to 21 (AYSGGLDTS) and Ala40 contribute to the ATP site. Tyr91 and Ser96 together coordinate L-citrulline. ATP is bound at residue Gly121. Residues Thr123, Asn127, and Asp128 each contribute to the L-aspartate site. Asn127 contacts L-citrulline. 5 residues coordinate L-citrulline: Arg131, Ser182, Ser191, Glu267, and Tyr279.

This sequence belongs to the argininosuccinate synthase family. Type 1 subfamily. Homotetramer.

It is found in the cytoplasm. The enzyme catalyses L-citrulline + L-aspartate + ATP = 2-(N(omega)-L-arginino)succinate + AMP + diphosphate + H(+). It participates in amino-acid biosynthesis; L-arginine biosynthesis; L-arginine from L-ornithine and carbamoyl phosphate: step 2/3. The polypeptide is Argininosuccinate synthase (Gluconobacter oxydans (strain 621H) (Gluconobacter suboxydans)).